Consider the following 885-residue polypeptide: Dipeptidyl peptidase 9 (885 aa).

Active-site charge relay system residues include serine 752, aspartate 830, and histidine 862. Serine 752 is a Val-boroPro binding site.

It belongs to the peptidase S9B family. DPPIV subfamily. Homodimer. Forms a ternary complex with NLRP1, composed of a DPP9 homodimer, one full-length NLRP1 protein, and one cleaved C-terminus of NLRP1 (NACHT, LRR and PYD domains-containing protein 1, C-terminus).

The protein localises to the nucleus. The enzyme catalyses Release of an N-terminal dipeptide, Xaa-Yaa-|-Zaa-, from a polypeptide, preferentially when Yaa is Pro, provided Zaa is neither Pro nor hydroxyproline.. Dipeptidyl peptidase that cleaves off N-terminal dipeptides from proteins having a Pro or Ala residue at position 2. Acts as a key inhibitor of the NLRP1 inflammasome. The sequence is that of Dipeptidyl peptidase 9 from Danio rerio (Zebrafish).